We begin with the raw amino-acid sequence, 134 residues long: Interleukin-5 (134 aa).

Positions M1 to A19 are cleaved as a signal peptide. N-linked (GlcNAc...) asparagine glycans are attached at residues N76 and N90.

The protein belongs to the IL-5 family. As to quaternary structure, homodimer; disulfide-linked. Interacts with IL5RA. Interacts with CSF2RB.

It localises to the secreted. Its function is as follows. Homodimeric cytokine expressed predominantly by T-lymphocytes and NK cells that plays an important role in the survival, differentiation, and chemotaxis of eosinophils. Also acts on activated and resting B-cells to induce immunoglobulin production, growth, and differentiation. Mechanistically, exerts its biological effects through a receptor composed of IL5RA subunit and the cytokine receptor common subunit beta/CSF2RB. Binding to the receptor leads to activation of various kinases including LYN, SYK and JAK2 and thereby propagates signals through the RAS-MAPK and JAK-STAT5 pathways respectively. The protein is Interleukin-5 (IL5) of Felis catus (Cat).